The sequence spans 124 residues: Large ribosomal subunit protein bL12 (124 aa).

This sequence belongs to the bacterial ribosomal protein bL12 family. Homodimer. Part of the ribosomal stalk of the 50S ribosomal subunit. Forms a multimeric L10(L12)X complex, where L10 forms an elongated spine to which 2 to 4 L12 dimers bind in a sequential fashion. Binds GTP-bound translation factors.

Its function is as follows. Forms part of the ribosomal stalk which helps the ribosome interact with GTP-bound translation factors. Is thus essential for accurate translation. In Bacteroides fragilis (strain ATCC 25285 / DSM 2151 / CCUG 4856 / JCM 11019 / LMG 10263 / NCTC 9343 / Onslow / VPI 2553 / EN-2), this protein is Large ribosomal subunit protein bL12.